A 611-amino-acid polypeptide reads, in one-letter code: MSKIIGIDLGTTNSCVAVMEGGEPKVIPNPEGNRTTPSVVAFKNEERQVGEVAKRQAITNPNTIMSVKRHMGTDYKVEVEGKDFTPQEISAIILQNLKASAEAYLGETVTKAVITVPAYFNDAERQATKDAGRIAGLEVERIINEPTAAALAYGLEKQDEEQKILVYDLGGGTFDVSILELADGTFEVISTAGDNRLGGDDFDQVIIDHLVAEFKKENSIDLSQDKMALQRLKDAAEKAKKDLSGVTQTQISLPFISAGAAGPLHLELTLTRAKFEEISAGLVERTLEPTRRALKDAGFAPSELDKVILVGGSTRIPAVQEAIKRETGKEPYKGVNPDEVVALGAAVQGGVLTGDVEGVLLLDVTPLSLGIETMGGVFTKLIERNTTIPTSKSQVFSTAADNQPAVDIHVLQGERPMSADNKTLGRFQLTDLPPAPRGIPQIEVTFDIDANGIVNVRAKDLGTSKEQTITIQSSSGLSDEEVDRMVQEAESNADADQKRKEEVELRNEADQLVFQTDKVVKDLEGKVDAAEVAKATEAKEALQAAIEKNELEEIRVKKDALQEIVQQLTVKLYEQAQAAAGQAEGAQGAQDAGAKKDNVVDAEFEEVKEDK.

Phosphothreonine; by autocatalysis is present on threonine 173. Over residues 579-592 (AAGQAEGAQGAQDA) the composition is skewed to low complexity. The segment at 579–611 (AAGQAEGAQGAQDAGAKKDNVVDAEFEEVKEDK) is disordered. Over residues 600-611 (VDAEFEEVKEDK) the composition is skewed to acidic residues.

Belongs to the heat shock protein 70 family.

Functionally, acts as a chaperone. In Bacillus mycoides (strain KBAB4) (Bacillus weihenstephanensis), this protein is Chaperone protein DnaK.